We begin with the raw amino-acid sequence, 241 residues long: tRNA pseudouridine synthase A (241 aa).

Catalysis depends on D51, which acts as the Nucleophile. Position 110 (Y110) interacts with substrate.

It belongs to the tRNA pseudouridine synthase TruA family. In terms of assembly, homodimer.

The enzyme catalyses uridine(38/39/40) in tRNA = pseudouridine(38/39/40) in tRNA. In terms of biological role, formation of pseudouridine at positions 38, 39 and 40 in the anticodon stem and loop of transfer RNAs. This chain is tRNA pseudouridine synthase A, found in Campylobacter jejuni subsp. doylei (strain ATCC BAA-1458 / RM4099 / 269.97).